A 541-amino-acid chain; its full sequence is GMP synthase [glutamine-hydrolyzing] (541 aa).

One can recognise a Glutamine amidotransferase type-1 domain in the interval Thr-17–Asp-212. Catalysis depends on Cys-93, which acts as the Nucleophile. Active-site residues include His-186 and Glu-188. In terms of domain architecture, GMPS ATP-PPase spans Trp-213–Arg-416. Ser-241–Thr-247 contacts ATP. Residues Arg-315, Asp-478, Lys-533, and Glu-539 each coordinate XMP.

In terms of assembly, homodimer. Mg(2+) is required as a cofactor.

It localises to the cytoplasm. It is found in the cytosol. The enzyme catalyses XMP + L-glutamine + ATP + H2O = GMP + L-glutamate + AMP + diphosphate + 2 H(+). The protein operates within purine metabolism; GMP biosynthesis; GMP from XMP (L-Gln route): step 1/1. Functionally, catalyzes the conversion of xanthine monophosphate (XMP) to GMP in the presence of glutamine and ATP through an adenyl-XMP intermediate. In Phaeosphaeria nodorum (strain SN15 / ATCC MYA-4574 / FGSC 10173) (Glume blotch fungus), this protein is GMP synthase [glutamine-hydrolyzing] (GUA1).